The primary structure comprises 133 residues: Small ribosomal subunit protein uS8 (133 aa).

This sequence belongs to the universal ribosomal protein uS8 family. As to quaternary structure, part of the 30S ribosomal subunit. Contacts proteins S5 and S12.

In terms of biological role, one of the primary rRNA binding proteins, it binds directly to 16S rRNA central domain where it helps coordinate assembly of the platform of the 30S subunit. This is Small ribosomal subunit protein uS8 from Synechococcus elongatus (strain ATCC 33912 / PCC 7942 / FACHB-805) (Anacystis nidulans R2).